The sequence spans 142 residues: PDZ domain-containing protein 11 (142 aa).

The PDZ domain occupies 49-131; the sequence is TIVLKKPPGA…ILMKVRYFPY (83 aa).

The protein resides in the cytoplasm. This chain is PDZ domain-containing protein 11 (pdzd11), found in Danio rerio (Zebrafish).